A 260-amino-acid chain; its full sequence is MNIEALKVFKESGEKITCLTAYDASFASVFDACGIDIILVGDSLGNVIQGDKNTLDVSMSDMIYHMQAVAKGTQNALRIADMPYQSYTYAEQTLTNAKRLIMAGAQMVKLEGGCEHEASFRILQGNDISVCGHLGLQPQSVVEIDGYRVQGRGKQGANKIIKNALALASWGVKVIVLECVPAELAKQVSQSVSIPIIGIGAGLDCDGQVLVSYDMLGVHVRHVPRFVKNFLTDNGDVKSAVNAFIKAVKDKSFPSKKYSY.

Residues D42 and D81 each coordinate Mg(2+). Residues 42-43, D81, and K109 contribute to the 3-methyl-2-oxobutanoate site; that span reads DS. Position 111 (E111) interacts with Mg(2+). E178 acts as the Proton acceptor in catalysis.

The protein belongs to the PanB family. In terms of assembly, homodecamer; pentamer of dimers. Mg(2+) is required as a cofactor.

Its subcellular location is the cytoplasm. It catalyses the reaction 3-methyl-2-oxobutanoate + (6R)-5,10-methylene-5,6,7,8-tetrahydrofolate + H2O = 2-dehydropantoate + (6S)-5,6,7,8-tetrahydrofolate. It participates in cofactor biosynthesis; (R)-pantothenate biosynthesis; (R)-pantoate from 3-methyl-2-oxobutanoate: step 1/2. Functionally, catalyzes the reversible reaction in which hydroxymethyl group from 5,10-methylenetetrahydrofolate is transferred onto alpha-ketoisovalerate to form ketopantoate. The sequence is that of 3-methyl-2-oxobutanoate hydroxymethyltransferase from Vesicomyosocius okutanii subsp. Calyptogena okutanii (strain HA).